Consider the following 45-residue polypeptide: Iota-conotoxin-like R11.10 (45 aa).

4 cysteine pairs are disulfide-bonded: C5–C19, C12–C22, C18–C27, and C21–C36. A D-leucine modification is found at L43. Residue R45 is a propeptide, removed by a carboxypeptidase.

Belongs to the conotoxin I1 superfamily. Expressed by the venom duct.

The protein resides in the secreted. Iota-conotoxins bind to voltage-gated sodium channels (Nav) and act as agonists by shifting the voltage-dependence of activation to more hyperpolarized levels. Produces general excitatory symptoms. The sequence is that of Iota-conotoxin-like R11.10 from Conus radiatus (Rayed cone).